We begin with the raw amino-acid sequence, 84 residues long: Small ribosomal subunit protein uS17 (84 aa).

The protein belongs to the universal ribosomal protein uS17 family. In terms of assembly, part of the 30S ribosomal subunit.

Its function is as follows. One of the primary rRNA binding proteins, it binds specifically to the 5'-end of 16S ribosomal RNA. This is Small ribosomal subunit protein uS17 from Glaesserella parasuis serovar 5 (strain SH0165) (Haemophilus parasuis).